The sequence spans 516 residues: 2-isopropylmalate synthase (516 aa).

The Pyruvate carboxyltransferase domain occupies 5-267 (IIIFDTTLRD…STDINIKEIH (263 aa)). Mn(2+) contacts are provided by Asp14, His202, His204, and Asn238. Residues 393 to 516 (KLEYFDVQSK…VNKELERLQK (124 aa)) are regulatory domain.

It belongs to the alpha-IPM synthase/homocitrate synthase family. LeuA type 1 subfamily. In terms of assembly, homodimer. Mn(2+) is required as a cofactor.

It is found in the cytoplasm. It catalyses the reaction 3-methyl-2-oxobutanoate + acetyl-CoA + H2O = (2S)-2-isopropylmalate + CoA + H(+). It participates in amino-acid biosynthesis; L-leucine biosynthesis; L-leucine from 3-methyl-2-oxobutanoate: step 1/4. Functionally, catalyzes the condensation of the acetyl group of acetyl-CoA with 3-methyl-2-oxobutanoate (2-ketoisovalerate) to form 3-carboxy-3-hydroxy-4-methylpentanoate (2-isopropylmalate). In Buchnera aphidicola subsp. Cinara cedri (strain Cc), this protein is 2-isopropylmalate synthase.